Consider the following 149-residue polypeptide: Transcriptional repressor NrdR (149 aa).

The segment at 3 to 34 (CPFCSHLETQVIETRVFEDAASIRRRRQCAAC) is a zinc-finger region. An ATP-cone domain is found at 49 to 139 (PAVVKKDGRR…VYRSFEGIDD (91 aa)).

It belongs to the NrdR family. Zn(2+) serves as cofactor.

Functionally, negatively regulates transcription of bacterial ribonucleotide reductase nrd genes and operons by binding to NrdR-boxes. This Verminephrobacter eiseniae (strain EF01-2) protein is Transcriptional repressor NrdR.